The following is a 146-amino-acid chain: UPF0178 protein BC_3040 (146 aa).

It belongs to the UPF0178 family.

The protein is UPF0178 protein BC_3040 of Bacillus cereus (strain ATCC 14579 / DSM 31 / CCUG 7414 / JCM 2152 / NBRC 15305 / NCIMB 9373 / NCTC 2599 / NRRL B-3711).